The following is a 294-amino-acid chain: RAB7A-interacting MON1-CCZ1 complex subunit 1 (294 aa).

An N-acetylalanine modification is found at Ala2.

It belongs to the RIMOC1 family. As to quaternary structure, interacts with the MON1A-CCZ1B complex. Interacts with GDP-bound RAB7A and promotes its interaction with the MON1A-CCZ1B complex.

It localises to the cytoplasm. It is found in the cytosol. In terms of biological role, plays an important role in the removal of damaged mitochondria via mitophagy by controlling the stability and localization of RAB7A. Required for the recruitment of RAB7A and ATG9A vesicles to damaged mitochondria and promotes the stability of RAB7A by inhibiting its proteasomal degradation during mitophagy. The sequence is that of RAB7A-interacting MON1-CCZ1 complex subunit 1 from Mus musculus (Mouse).